Reading from the N-terminus, the 1201-residue chain is Putative disease resistance protein At4g19050 (1201 aa).

An ATP-binding site is contributed by glycine 33–threonine 40. LRR repeat units follow at residues lysine 469–glutamine 491, glycine 492–asparagine 514, glutamine 517–serine 539, methionine 540–threonine 562, glutamate 680–valine 701, asparagine 703–threonine 725, histidine 726–methionine 748, tyrosine 750–leucine 771, asparagine 773–threonine 795, asparagine 796–leucine 818, cysteine 820–leucine 841, asparagine 843–threonine 865, histidine 866–methionine 888, and tyrosine 890–serine 911. A compositionally biased stretch (basic and acidic residues) spans aspartate 1162–histidine 1180. Residues aspartate 1162 to valine 1201 form a disordered region. Residues glycine 1185 to valine 1201 are compositionally biased toward polar residues.

It belongs to the disease resistance NB-LRR family.

In terms of biological role, potential disease resistance protein. In Arabidopsis thaliana (Mouse-ear cress), this protein is Putative disease resistance protein At4g19050.